Here is a 1578-residue protein sequence, read N- to C-terminus: MEEPTVQFSDEDLVDNFPPMDDERVQLEDLEFEVERPSEGLEDEGSHSSAKKESKGAEKMRKSTTKDQVQAFHLRKSLNLLDKMHEEKDVFIQKTKGELHICRQRMDLLNKQQESLAAEIATEKEANNMAAIGRLQAASRRLQTELENEKDLQSKITAMLKDSENAMWHIEIQKGQFEDVRKHHEAEAEARQRGLEVHSARQLQREREAMEKSEKNRLLRARKSLHTQKELGLRHQKLVEDAQRNHRIAVKFLKASLGRVREREQKEEMESRTHMQRRMDAVLSLKNNITASRETLKKFQAWGQTRADLAKQKALTEKEVILSQGGDAFKYLFHQRRHQELEAQKRAFEEEQKLRKQEIVNRILKEEAEEEQRKRRQHPLSKPINRRTLRDKTWQYISDFCEGKSVLTSQQERERELLLYPKTVCVIKAISSESVQVDLGSISTEDEVLAEPDISGLWNKESYQVPKEDMERKPVGGSKMEKDILARTMEQLRSGVVQKQVVSGREFKGRPFNSKPEVIHFKDFDIGKVYKKKITLINATYTINYCKLVGVEENLKDFIHIDFEPPGPMSAGMSCEVLVTFKPMINKDLEGNVSFLAQTGSFSVPLKCSTKKCSLSLDKELIDFGTYVVGETTSRIITLTNVGGLGTKFKFLPDSEFYEMDESQPAMKISSLFTCEEKIIYEKIMTSLSEQQLEVNDSSLVDLQSLKESEKQLDDPEVTTAAVSAMTMIPSEEQAEITLGEVTEGEIGPFSSVKVPITFTPVIPGEVQTKFKVMFKNPQSPPLYFRATGTAIDVPVWVPKATVDLKICMYDRLYQDSITVHTRSKAALRLKFEVCKELRGHIELLPETGYIQAQSTYSVQLKFLPRQSLPEDARKYFDPASRVLEAPMTIRVADQIKPVRFTVQAIVTTSDLEINPSEINFGYCTIYEAIRTEICLSNLSLLPQEFGFVGLPKYVDIQPNDGFGTILPLETLHLDVIFQPIKAKEYKFELVCKSEINRCFKVSCQAVGVHPPLELSHYQIKFSATSLYDTSVSTLYVINSHLSMNKMIHSLPRIGSEEAAPVGPTSFEFLLPPNSPITISPSVGTVLPGKRCLIQVAFQPVLPKEIIYKEASQILNKEIETKPVSQKEIVQRKELWKQSFSVVRVHNRDRPTRVSTPQATELQRPVINSSSTEFQIAQATLSKAFQGKFNRFVIPCVVASGDIKDRKTAEPLSFSPHNTLYLELWCPAVAPFIVVTSHKGKTDFNFGDIAVGHRSVKKITLQNICNEDLTLEYSVLNPNGPFVRLNPFNKLRSGETQTLVLSFSPHENILAQETLDIITKRGTLSLTLFGMGVASMITCSIDGNILNMGYVLARESVSTNFKLQNESSLPIKFWVRLESLSRKKAEAHQQLPKFITSHEQRAEIVGTQNYNGQSVFSIVPVEGLMFPGKAQEFTVTFSPDHESLFFSDLLKVVLFEKKVSHQILLKGAAREHMMFVEGGDPLDVPVESLAVVTAFDTEHKEEAEELKPILVTLNYVQLDTDTTTSPATRELQVGCIRTTQPSPRRPDHPLMVSTLLQLRGDVKETYKVTFVAHVVTGL.

The segment covering 1-14 has biased composition (acidic residues); sequence MEEPTVQFSDEDLV. Disordered regions lie at residues 1–21 and 33–67; these read MEEPTVQFSDEDLVDNFPPMD and EVERPSEGLEDEGSHSSAKKESKGAEKMRKSTTKD. The span at 33-65 shows a compositional bias: basic and acidic residues; that stretch reads EVERPSEGLEDEGSHSSAKKESKGAEKMRKSTT. Coiled coils occupy residues 103–156 and 330–378; these read RQRM…QSKI and KYLF…RRQH.

It belongs to the CFAP74 family.

Its subcellular location is the cytoplasm. The protein localises to the cytoskeleton. It localises to the cilium axoneme. It is found in the flagellum axoneme. Its function is as follows. As part of the central apparatus of the cilium axoneme may play a role in cilium movement. May play an important role in sperm architecture and function. The protein is Cilia- and flagella-associated protein 74 of Mus musculus (Mouse).